Reading from the N-terminus, the 283-residue chain is Succinate dehydrogenase [ubiquinone] iron-sulfur subunit, mitochondrial (283 aa).

A 2Fe-2S ferredoxin-type domain is found at 66–145 (KKPTLQTYSI…PVKIYPLPHM (80 aa)). [2Fe-2S] cluster contacts are provided by Cys-105, Cys-110, Cys-113, and Cys-125. Positions 186–216 (DRKKLDGMYECILCACCSTSCPSYWWNQDEY) constitute a 4Fe-4S ferredoxin-type domain. Positions 196, 199, and 202 each coordinate [4Fe-4S] cluster. Cys-206 is a [3Fe-4S] cluster binding site. Trp-211 lines the a ubiquinone pocket. [3Fe-4S] cluster contacts are provided by Cys-253 and Cys-259. A [4Fe-4S] cluster-binding site is contributed by Cys-263.

It belongs to the succinate dehydrogenase/fumarate reductase iron-sulfur protein family. As to quaternary structure, component of complex II composed of four subunits: a flavoprotein (FP), an iron-sulfur protein (IP), and a cytochrome b composed of a large and a small subunit. Requires [2Fe-2S] cluster as cofactor. The cofactor is [3Fe-4S] cluster. It depends on [4Fe-4S] cluster as a cofactor.

Its subcellular location is the mitochondrion inner membrane. The catalysed reaction is a quinone + succinate = fumarate + a quinol. The protein operates within carbohydrate metabolism; tricarboxylic acid cycle; fumarate from succinate (eukaryal route): step 1/1. Its function is as follows. Iron-sulfur protein (IP) subunit of succinate dehydrogenase (SDH) that is involved in complex II of the mitochondrial electron transport chain and is responsible for transferring electrons from succinate to ubiquinone (coenzyme Q). The protein is Succinate dehydrogenase [ubiquinone] iron-sulfur subunit, mitochondrial (SDH2) of Uromyces fabae (Rust fungus).